The primary structure comprises 227 residues: Exodeoxyribonuclease (227 aa).

It catalyses the reaction Exonucleolytic cleavage in the 3'- to 5'-direction to yield nucleoside 5'-phosphates.. Functionally, 3'-5' exonuclease that preferentially uses ssDNA as substrate. Plays a role in group I intron homing. May play a role in the final step of host DNA degradation, by scavenging DNA into mononucleotides. The chain is Exodeoxyribonuclease (dexA) from Escherichia coli (Bacteriophage T4).